The following is a 242-amino-acid chain: Segregation and condensation protein A (242 aa).

This sequence belongs to the ScpA family. In terms of assembly, component of a cohesin-like complex composed of ScpA, ScpB and the Smc homodimer, in which ScpA and ScpB bind to the head domain of Smc. The presence of the three proteins is required for the association of the complex with DNA.

The protein localises to the cytoplasm. Functionally, participates in chromosomal partition during cell division. May act via the formation of a condensin-like complex containing Smc and ScpB that pull DNA away from mid-cell into both cell halves. This is Segregation and condensation protein A from Lactococcus lactis subsp. cremoris (strain MG1363).